Here is a 107-residue protein sequence, read N- to C-terminus: Cell cycle protein GpsB (107 aa).

Residues 32–65 (LDNVIQDYETYISEIEELKAEIERLKNQNTHPKS) adopt a coiled-coil conformation. Positions 57–80 (KNQNTHPKSPSTENRHAMVQPTRV) are disordered. Residues 58–68 (NQNTHPKSPST) are compositionally biased toward polar residues.

The protein belongs to the GpsB family. As to quaternary structure, forms polymers through the coiled coil domains. Interacts with PBP1, MreC and EzrA.

It is found in the cytoplasm. Its function is as follows. Divisome component that associates with the complex late in its assembly, after the Z-ring is formed, and is dependent on DivIC and PBP2B for its recruitment to the divisome. Together with EzrA, is a key component of the system that regulates PBP1 localization during cell cycle progression. Its main role could be the removal of PBP1 from the cell pole after pole maturation is completed. Also contributes to the recruitment of PBP1 to the division complex. Not essential for septum formation. The chain is Cell cycle protein GpsB from Streptococcus uberis (strain ATCC BAA-854 / 0140J).